Consider the following 505-residue polypeptide: Glycerol kinase (505 aa).

Thr-14 lines the ADP pocket. Thr-14, Thr-15, and Ser-16 together coordinate ATP. Thr-14 serves as a coordination point for sn-glycerol 3-phosphate. Arg-18 contributes to the ADP binding site. Residues Arg-84, Glu-85, Tyr-136, and Asp-246 each contribute to the sn-glycerol 3-phosphate site. Glycerol contacts are provided by Arg-84, Glu-85, Tyr-136, Asp-246, and Gln-247. ADP-binding residues include Thr-268 and Gly-311. Residues Thr-268, Gly-311, Gln-315, and Gly-412 each coordinate ATP. Residues Gly-412 and Asn-416 each contribute to the ADP site.

This sequence belongs to the FGGY kinase family.

It carries out the reaction glycerol + ATP = sn-glycerol 3-phosphate + ADP + H(+). The protein operates within polyol metabolism; glycerol degradation via glycerol kinase pathway; sn-glycerol 3-phosphate from glycerol: step 1/1. Inhibited by fructose 1,6-bisphosphate (FBP). Functionally, key enzyme in the regulation of glycerol uptake and metabolism. Catalyzes the phosphorylation of glycerol to yield sn-glycerol 3-phosphate. This is Glycerol kinase from Vibrio campbellii (strain ATCC BAA-1116).